Here is a 44-residue protein sequence, read N- to C-terminus: Phosphatase RapA inhibitor (44 aa).

The propeptide occupies M1–A39.

This sequence belongs to the Phr family. In terms of assembly, interacts with RapA and inhibits its interaction with Spo0F. In terms of processing, secreted with a propeptide domain, which is cleaved in the cell wall by the secreted serine proteases subtilisin and Vpr to produce a mature signaling peptide. Contains a predicted signal peptide cleavage site in the N-terminal region, however the propeptide is probably subject to only one processing event, at the N-terminal end of the mature peptide.

It localises to the secreted. The protein resides in the cytoplasm. Inhibition of RapA requires a free carboxylate group at the C-terminal end of the PhrA pentapeptide. A free C-terminal carboxylic acid PhrA pentapeptide inhibits RapA phosphatase activity at a 1:1 ratio and is approximately 200 fold more active than a C-terminal amide peptide. Signaling molecule involved in the regulation of sporulation. Secreted during production, but the mature peptide acts intracellularly, indicating that it needs to be imported into the cell to function. Inhibitor of the RapA phosphatase activity. Does not act on RapB. This is Phosphatase RapA inhibitor from Bacillus subtilis (strain 168).